Here is an 824-residue protein sequence, read N- to C-terminus: E3 ubiquitin-protein ligase TRIM71 (824 aa).

The RING-type zinc-finger motif lies at 23-93 (CPLCKELCGC…PLKLRCPTCD (71 aa)). The tract at residues 37–56 (SSNSSTSSSSSQTSNSSSTS) is disordered. The B box-type 1; atypical zinc finger occupies 147–194 (LSDPQCSSCDEGNPATSHCLDCQEYLCDNCVRAHQRVRLTKDHFIEGL). 8 residues coordinate Zn(2+): Cys152, Cys155, Cys176, His180, Cys234, His237, Cys257, and His262. The B box-type 2 zinc finger occupies 229–270 (ERMDFCQHHDDAVLRFFCDSCTVPICRECSLGRHAGHSFTYL). The stretch at 293–321 (QAIQLSIEKAQAIAEQVELKAKVVQSEVK) forms a coiled coil. Residues 435–536 (SSGAFATASK…IEGSPFKVMV (102 aa)) form a Filamin repeat. NHL repeat units lie at residues 549–592 (MASF…FKPC), 596–639 (HHKF…FTFD), 643–686 (LLKF…FGPD), 690–733 (LNKY…IRPD), 737–780 (ARFL…FEPN), and 784–824 (LCKF…ILMF).

This sequence belongs to the TRIM/RBCC family.

It localises to the cytoplasm. It is found in the P-body. It catalyses the reaction S-ubiquitinyl-[E2 ubiquitin-conjugating enzyme]-L-cysteine + [acceptor protein]-L-lysine = [E2 ubiquitin-conjugating enzyme]-L-cysteine + N(6)-ubiquitinyl-[acceptor protein]-L-lysine.. The protein operates within protein modification; protein ubiquitination. Its function is as follows. E3 ubiquitin-protein ligase that cooperates with the microRNAs (miRNAs) machinery and promotes embryonic stem cells proliferation and maintenance. Binds to miRNAs and participates in post-transcriptional repression of transcripts. Required to maintain proliferation and prevent premature differentiation of neural progenitor cells during early neural development. The polypeptide is E3 ubiquitin-protein ligase TRIM71 (trim71) (Danio rerio (Zebrafish)).